We begin with the raw amino-acid sequence, 189 residues long: Large ribosomal subunit protein eL18 (189 aa).

The protein belongs to the eukaryotic ribosomal protein eL18 family.

The protein resides in the cytoplasm. This is Large ribosomal subunit protein eL18 (RpL18) from Drosophila pseudoobscura pseudoobscura (Fruit fly).